A 166-amino-acid polypeptide reads, in one-letter code: Replication restart protein DnaT (166 aa).

The protein belongs to the DnaT family. As to quaternary structure, homooligomerizes. Interacts with PriB. Component of the replication restart primosome. Primosome assembly occurs via a 'hand-off' mechanism. PriA binds to replication forks, subsequently PriB then DnaT bind; DnaT then displaces ssDNA to generate the helicase loading substrate.

In terms of biological role, involved in the restart of stalled replication forks, which reloads the replicative helicase on sites other than the origin of replication. Can function in multiple replication restart pathways. Displaces ssDNA from a PriB-ssDNA complex. Probably forms a spiral filament on ssDNA. This is Replication restart protein DnaT from Buchnera aphidicola subsp. Schizaphis graminum (strain Sg).